The chain runs to 168 residues: Pleiotrophin (168 aa).

The first 32 residues, 1-32 (MQTPQFLQQRRKFAAAFLAFIFLLAVVDTAEA), serve as a signal peptide directing secretion. 5 disulfide bridges follow: C47/C76, C55/C85, C62/C89, C99/C131, and C109/C141. Chondroitin sulfate binding stretches follow at residues 92-99 (KKQFGAEC) and 123-131 (KRALHNADC). The interval 139 to 168 (KPCGKVTKPKPQAESKKKKKEGKKQEKMLD) is disordered. The interval 147–168 (PKPQAESKKKKKEGKKQEKMLD) is chondroitin sulfate A binding.

The protein belongs to the pleiotrophin family. As to quaternary structure, interacts with ALK and NEK6. Interacts with PTPRZ1 (via chondroitin sulfate groups); promotes formation of homooligomers; oligomerization impairs tyrosine phosphatase activity. Forms a complex with PTPRZ1 and CTNNB1; this complex inactivates PTPRZ1 protein tyrosine phosphatase activity through PTN interaction and stimulates tyrosine phosphorylation of CTNNB1. Interacts with ITGB3 and ITGA5. Forms a complex with PTPRZ1 and integrin alpha-V/beta-3 (ITGAV:ITGB3) that stimulates endothelial cell migration through ITGB3 'Tyr-773' phosphorylation. Interacts with SDC3 (via heparan sulfate chains); this interaction mediates the neurite outgrowth-promoting signal from PTN to the cytoskeleton of growing neurites; this interaction mediates osteoblast recruitment. Interacts with GPC2 (via heparan sulfate); this interaction promotes neurite outgrowth through binding of PTN with chondroitin sulfate of proteoglycans, thereby releasing PTPRS of chondroitin sulfate proteoglycans (CSPGs) and leading to binding with heparan sulfate of GPC2. Phosphorylated by NEK6.

It is found in the secreted. Secreted growth factor that mediates its signal through cell-surface proteoglycan and non-proteoglycan receptors. Binds cell-surface proteoglycan receptor via their chondroitin sulfate (CS) groups. Thereby regulates many processes like cell proliferation, cell survival, cell growth, cell differentiation and cell migration in several tissues namely neuron and bone. Also plays a role in synaptic plasticity and learning-related behavior by inhibiting long-term synaptic potentiation. Binds PTPRZ1, leading to neutralization of the negative charges of the CS chains of PTPRZ1, inducing PTPRZ1 clustering, thereby causing the dimerization and inactivation of its phosphatase activity leading to increased tyrosine phosphorylation of each of the PTPRZ1 substrates like ALK, CTNNB1 or AFAP1L2 in order to activate the PI3K-AKT pathway. Through PTPRZ1 binding controls oligodendrocyte precursor cell differentiation by enhancing the phosphorylation of AFAP1L2 in order to activate the PI3K-AKT pathway. Forms a complex with PTPRZ1 and integrin alpha-V/beta-3 (ITGAV:ITGB3) that stimulates endothelial cell migration through SRC dephosphorylation and activation that consequently leads to ITGB3 'Tyr-773' phosphorylation. In adult hippocampus promotes dendritic arborization, spine development, and functional integration and connectivity of newborn granule neurons through ALK by activating AKT signaling pathway. Binds GPC2 and chondroitin sulfate proteoglycans (CSPGs) at the neuron surface, leading to abrogation of binding between PTPRS and CSPGs and neurite outgrowth promotion. Binds SDC3 and mediates bone formation by recruiting and attaching osteoblasts/osteoblast precursors to the sites for new bone deposition. Binds ALK and promotes cell survival and cell proliferation through MAPK pathway activation. Inhibits proliferation and enhances differentiation of neural stem cells by inhibiting FGF2-induced fibroblast growth factor receptor signaling pathway. Mediates regulatory mechanisms in normal hemostasis and in hematopoietic regeneration and in maintaining the balance of myeloid and lymphoid regeneration. In addition may play a role in the female reproductive system, auditory response and the progesterone-induced decidualization pathway. The protein is Pleiotrophin of Sus scrofa (Pig).